A 795-amino-acid polypeptide reads, in one-letter code: ATP-dependent RNA helicase DHX15 (795 aa).

The tract at residues 1-108 (MSKRHRLDLG…HSTHAGHAGH (108 aa)) is disordered. Phosphoserine is present on S15. Positions 20-62 (AGTDGKDRDRDRDREDRSKDRDRERDRGDREREREKEKEKELR) are enriched in basic and acidic residues. Low complexity predominate over residues 79–108 (ASHSAHSTHSAHSAHSTHSAHSTHAGHAGH). The region spanning 147-313 (TDILVRHQSF…FDNCPLLTIP (167 aa)) is the Helicase ATP-binding domain. Residue 160–167 (GETGSGKT) coordinates ATP. The DEAH box signature appears at 260-263 (DEAH). The region spanning 338–518 (TVIQIHMCEE…SVVLQLKKLG (181 aa)) is the Helicase C-terminal domain. N6-acetyllysine is present on K488. A Glycyl lysine isopeptide (Lys-Gly) (interchain with G-Cter in SUMO2) cross-link involves residue K786.

The protein belongs to the DEAD box helicase family. DEAH subfamily. DDX15/PRP43 sub-subfamily. Component of the U11/U12 snRNPs that are part of the U12-type spliceosome. Identified in the Intron Large spliceosome complex (IL, also named intron lariat spliceosome), a post-mRNA release spliceosomal complex containing the excised intron, U2, U5 and U6 snRNPs, and splicing factors; the association may be transient. The IL complex exists in two distinct conformations, one with the DHX15 (ILS2) and one without (ILS1). Interacts with TFIP11 (via G-patch domain); indicative for a recruitment to the IL complex. Interacts with SSB/La. Interacts with GPATCH2 (via G-patch domain); promoting the RNA helicase activity. Interacts with NKRF (via G-patch domain); promoting the RNA helicase activity. Interacts with NLRP6.

It is found in the nucleus. Its subcellular location is the nucleolus. The catalysed reaction is ATP + H2O = ADP + phosphate + H(+). With respect to regulation, ATPase activity is enhanced upon binding to G-patch domain-containing proteins. G-patch domain-containing proteins act like a brace that tethers mobile sections of DHX15 together, stabilizing a functional conformation with high RNA affinity, thereby promoting the ATPase activity. In terms of biological role, RNA helicase involved in mRNA processing and antiviral innate immunity. Pre-mRNA processing factor involved in disassembly of spliceosomes after the release of mature mRNA. In cooperation with TFIP11 seem to be involved in the transition of the U2, U5 and U6 snRNP-containing IL complex to the snRNP-free IS complex leading to efficient debranching and turnover of excised introns. Plays a key role in antiviral innate immunity by promoting both MAVS-dependent signaling and NLRP6 inflammasome. Acts as an RNA virus sensor: recognizes and binds viral double stranded RNA (dsRNA) and activates the MAVS-dependent signaling to produce interferon-beta and interferon lambda-3 (IFNL3). Involved in intestinal antiviral innate immunity together with NLRP6: recognizes and binds viral dsRNA and promotes activation of the NLRP6 inflammasome in intestinal epithelial cells to restrict infection by enteric viruses. The NLRP6 inflammasome acts by promoting maturation and secretion of IL18 in the extracellular milieu. Also involved in antibacterial innate immunity by promoting Wnt-induced antimicrobial protein expression in Paneth cells. This Pongo abelii (Sumatran orangutan) protein is ATP-dependent RNA helicase DHX15.